The primary structure comprises 1271 residues: Diacylglycerol kinase kappa (1271 aa).

Residues 1-15 (MDRGAAAAQGTAPPQ) are compositionally biased toward low complexity. The disordered stretch occupies residues 1–160 (MDRGAAAAQG…PEPTPEPVTE (160 aa)). The segment covering 23–44 (SPEPPPPWPPPPPPPAPPPAPP) has biased composition (pro residues). 33 tandem repeats follow at residues 48–51 (EASP), 52–55 (EPIP), 56–59 (EPCP), 60–63 (ELAP), 64–67 (GPCP), 68–71 (EATS), 72–75 (ESAT), 76–79 (ELYT), 80–83 (EPTP), 84–87 (EPAT), 88–91 (EPAS), 92–95 (EPAP), 96–99 (EPAT), 100–103 (EPAP), 104–107 (EPAT), 108–111 (EPAP), 112–115 (EPAP), 116–119 (EPAT), 120–123 (ESAP), 124–127 (EPTP), 128–131 (EPAL), 132–135 (ESVP), 136–139 (EPAP), 140–143 (ELTP), 144–147 (EVAP), 148–151 (ELAP), 152–155 (EPTP), 156–159 (EPVT), 160–163 (ELAP), 164–167 (EFCP), 168–171 (EAAP), 172–175 (EFRP), and 176–179 (SPAP). The interval 48-179 (EASPEPIPEP…APEFRPSPAP (132 aa)) is 33 X 4 AA approximate tandem repeats of E-P-A-P. Over residues 52–66 (EPIPEPCPELAPGPC) the composition is skewed to pro residues. The residue at position 78 (tyrosine 78) is a Phosphotyrosine. The span at 82–116 (TPEPATEPASEPAPEPATEPAPEPATEPAPEPAPE) shows a compositional bias: pro residues. Residues 139–149 (PELTPEVAPEL) are compositionally biased toward low complexity. The tract at residues 190-209 (ERGLKTSPSPSPSPSPRTPM) is disordered. The 94-residue stretch at 216–309 (KILKEGPMLK…WINIIKTIQQ (94 aa)) folds into the PH domain. 2 consecutive Phorbol-ester/DAG-type zinc fingers follow at residues 327 to 377 (MHCW…SKDC) and 398 to 449 (PHQW…SKEC). The DAGKc domain maps to 487–622 (ACSCPLLIFI…LDRWSVMIRE (136 aa)). 2 disordered regions span residues 805-825 (DDPEDINQTSPRRRSRRGTLS) and 1252-1271 (RHREDEAEGDDPLTPSRSQL). Positions 1199-1268 (PIFVPEEKSS…EGDDPLTPSR (70 aa)) are required for localization to the plasma membrane.

Belongs to the eukaryotic diacylglycerol kinase family. In terms of assembly, does not form homooligomers. Post-translationally, phosphorylated at Tyr-78 by some member of the SRC family in response to H(2)O(2). In terms of tissue distribution, expressed in testis, and to a lesser extent in placenta.

The protein localises to the cell membrane. It carries out the reaction a 1,2-diacyl-sn-glycerol + ATP = a 1,2-diacyl-sn-glycero-3-phosphate + ADP + H(+). The enzyme catalyses 1,2-di-(9Z-octadecenoyl)-sn-glycerol + ATP = 1,2-di-(9Z-octadecenoyl)-sn-glycero-3-phosphate + ADP + H(+). It functions in the pathway lipid metabolism; glycerolipid metabolism. Inhibited in response to H(2)O(2). Functionally, diacylglycerol kinase that converts diacylglycerol/DAG into phosphatidic acid/phosphatidate/PA and regulates the respective levels of these two bioactive lipids. Thereby, acts as a central switch between the signaling pathways activated by these second messengers with different cellular targets and opposite effects in numerous biological processes. The sequence is that of Diacylglycerol kinase kappa from Homo sapiens (Human).